We begin with the raw amino-acid sequence, 241 residues long: Cobalt transport protein CbiM (241 aa).

Positions 1-23 (MKKNLTFFMVIALLFTITPNVYA) are cleaved as a signal peptide. Transmembrane regions (helical) follow at residues 29–49 (GFLP…FIII), 66–86 (MLLG…IPSV), 98–118 (LSAI…VLIF), 121–141 (ILLA…MGIM), 160–180 (VAVF…TSVQ), and 202–222 (IFSI…VIIF).

Belongs to the CbiM family. In terms of assembly, forms an energy-coupling factor (ECF) transporter complex composed of an ATP-binding protein (A component, CbiO), a transmembrane protein (T component, CbiQ) and 2 possible substrate-capture proteins (S components, CbiM and CbiN) of unknown stoichimetry.

Its subcellular location is the cell membrane. It functions in the pathway cofactor biosynthesis; adenosylcobalamin biosynthesis. Its function is as follows. Part of the energy-coupling factor (ECF) transporter complex CbiMNOQ involved in cobalt import. The sequence is that of Cobalt transport protein CbiM from Clostridium tetani (strain Massachusetts / E88).